We begin with the raw amino-acid sequence, 334 residues long: Glutaminase (334 aa).

Substrate-binding residues include serine 76, asparagine 126, glutamate 170, asparagine 177, tyrosine 201, tyrosine 253, and valine 271.

This sequence belongs to the glutaminase family. As to quaternary structure, homotetramer.

It carries out the reaction L-glutamine + H2O = L-glutamate + NH4(+). In Nostoc sp. (strain PCC 7120 / SAG 25.82 / UTEX 2576), this protein is Glutaminase.